Here is a 122-residue protein sequence, read N- to C-terminus: Large ribosomal subunit protein uL14 (122 aa).

This sequence belongs to the universal ribosomal protein uL14 family. As to quaternary structure, part of the 50S ribosomal subunit. Forms a cluster with proteins L3 and L19. In the 70S ribosome, L14 and L19 interact and together make contacts with the 16S rRNA in bridges B5 and B8.

Its function is as follows. Binds to 23S rRNA. Forms part of two intersubunit bridges in the 70S ribosome. The chain is Large ribosomal subunit protein uL14 from Pseudomonas entomophila (strain L48).